Consider the following 331-residue polypeptide: Olfactory receptor 7D11 (331 aa).

The Extracellular portion of the chain corresponds to 1-25 (MEIENHTLITKFLILGLSDDPELQP). N-linked (GlcNAc...) asparagine glycosylation occurs at asparagine 5. The helical transmembrane segment at 26–46 (ILFGLFLSMYLVTLLGNLLII) threads the bilayer. At 47–57 (LAVSSDSHLHK) the chain is on the cytoplasmic side. A helical transmembrane segment spans residues 58–78 (PMYFLLSNLSFIDICFISTTI). Over 79–97 (PKMLVNMQSQIKDISYIEC) the chain is Extracellular. Cysteine 97 and cysteine 179 are oxidised to a cystine. Residues 98–118 (LTQVFFFNIFAGMDNFLLTLM) form a helical membrane-spanning segment. Over 119-142 (AYDRFVAICHPLNYTVIMNPRLCA) the chain is Cytoplasmic. The helical transmembrane segment at 143 to 163 (LLILMFWIIMFWVSLIHVLLM) threads the bilayer. Residues 164–196 (NELNFSRGTEIPHFFCELAQVLKVSNSDNHVNN) lie on the Extracellular side of the membrane. Asparagine 167 carries an N-linked (GlcNAc...) asparagine glycan. The helical transmembrane segment at 197–217 (VFMYVVTSLLGVIPMTGILMS) threads the bilayer. The Cytoplasmic segment spans residues 218-244 (YSQIFSSLFRMSSTVSKYKAFSTCGSH). Residues 245–265 (LCVVTLFYGSGFGVYFSSSVV) form a helical membrane-spanning segment. The Extracellular segment spans residues 266–271 (HSTQRR). Residues 272 to 292 (KVASLMYTVISPMLNPFIYTL) form a helical membrane-spanning segment. Residues 293-331 (RNKDVKGALGKLFNRVASSPSCINDIRNKLLLRSVRQIL) lie on the Cytoplasmic side of the membrane.

Belongs to the G-protein coupled receptor 1 family.

It localises to the cell membrane. In terms of biological role, possible olfactory or taste receptor. In Mus musculus (Mouse), this protein is Olfactory receptor 7D11.